The chain runs to 442 residues: Tyrosine--tRNA ligase (442 aa).

L-tyrosine is bound at residue Tyr55. Residues 60 to 69 (PTAPSLHLGN) carry the 'HIGH' region motif. 2 residues coordinate L-tyrosine: Tyr190 and Gln194. The 'KMSKS' region motif lies at 250–254 (KFGKS). An ATP-binding site is contributed by Lys253. Residues 373–438 (VAIAQALVDT…GKKTLAGVFV (66 aa)) form the S4 RNA-binding domain.

This sequence belongs to the class-I aminoacyl-tRNA synthetase family. TyrS type 1 subfamily. As to quaternary structure, homodimer.

The protein localises to the cytoplasm. The catalysed reaction is tRNA(Tyr) + L-tyrosine + ATP = L-tyrosyl-tRNA(Tyr) + AMP + diphosphate + H(+). Functionally, catalyzes the attachment of tyrosine to tRNA(Tyr) in a two-step reaction: tyrosine is first activated by ATP to form Tyr-AMP and then transferred to the acceptor end of tRNA(Tyr). The sequence is that of Tyrosine--tRNA ligase from Leifsonia xyli subsp. xyli (strain CTCB07).